The primary structure comprises 379 residues: 23S rRNA (uracil(747)-C(5))-methyltransferase RlmC (379 aa).

[4Fe-4S] cluster is bound by residues Cys-3, Cys-11, Cys-14, and Cys-86. The S-adenosyl-L-methionine site is built by Gln-211, Phe-240, Glu-262, and Asn-310. Residue Cys-337 is the Nucleophile of the active site.

It belongs to the class I-like SAM-binding methyltransferase superfamily. RNA M5U methyltransferase family. RlmC subfamily.

The catalysed reaction is uridine(747) in 23S rRNA + S-adenosyl-L-methionine = 5-methyluridine(747) in 23S rRNA + S-adenosyl-L-homocysteine + H(+). In terms of biological role, catalyzes the formation of 5-methyl-uridine at position 747 (m5U747) in 23S rRNA. The sequence is that of 23S rRNA (uracil(747)-C(5))-methyltransferase RlmC from Halothiobacillus neapolitanus (strain ATCC 23641 / c2) (Thiobacillus neapolitanus).